A 316-amino-acid chain; its full sequence is D-alanine--D-alanine ligase (316 aa).

The 188-residue stretch at 129-316 (KYILQAAGIP…ALQAEFCRYP (188 aa)) folds into the ATP-grasp domain. Residue 162-217 (EGSLLYPMFIKPANMGSSVGITKAENREELQNALQEAYRYDTRAIVEQGIEAREIE) participates in ATP binding. Residues aspartate 288, glutamate 301, and asparagine 303 each coordinate Mg(2+).

Belongs to the D-alanine--D-alanine ligase family. It depends on Mg(2+) as a cofactor. Requires Mn(2+) as cofactor.

It is found in the cytoplasm. It catalyses the reaction 2 D-alanine + ATP = D-alanyl-D-alanine + ADP + phosphate + H(+). Its pathway is cell wall biogenesis; peptidoglycan biosynthesis. Cell wall formation. This is D-alanine--D-alanine ligase (ddl) from Enterococcus gallinarum.